The sequence spans 310 residues: MEEQLRVGGCSPDGGFTIVNEAPVADLLEFLHIDVELEHARDDREESARSKNVMRKQRNWERRLEVKKSKRKEEKLRKKLNRQDKDVSDAQLSKRVIKAITKERLEGARAAGLRLCVDLSMTEHLTHKEISRLAAQIRRLYGSNKKALQPFHVFLTELQEDSLLYKECVGMNDGFMHYLIDVTEESWFHLFPSEDVIYLTPDASEALESVEEDKIYILGGLVDETIHKKISYTKAKELGVRTARLPIDEYMVKKENPKNFHSKILAINQVFDILLTFRDTRDWTKALMAGIPPGKGFVLASAASKPLEET.

Residues 55 to 94 (RKQRNWERRLEVKKSKRKEEKLRKKLNRQDKDVSDAQLSK) are a coiled coil. One can recognise an SAM-dependent MTase TRM10-type domain in the interval 101–298 (TKERLEGARA…AGIPPGKGFV (198 aa)).

The protein belongs to the class IV-like SAM-binding methyltransferase superfamily. TRM10 family.

The enzyme catalyses guanosine(9) in tRNA + S-adenosyl-L-methionine = N(1)-methylguanosine(9) in tRNA + S-adenosyl-L-homocysteine + H(+). Its function is as follows. S-adenosyl-L-methionine-dependent guanine N(1)-methyltransferase that catalyzes the formation of N(1)-methylguanine at position 9 (m1G9) in tRNAs. Probably not able to catalyze formation of N(1)-methyladenine at position 9 (m1A9) in tRNAs. This is tRNA methyltransferase 10 homolog B (trmt10b) from Danio rerio (Zebrafish).